Here is a 382-residue protein sequence, read N- to C-terminus: Anhydro-N-acetylmuramic acid kinase (382 aa).

22-29 (GTSMDGVD) contributes to the ATP binding site.

Belongs to the anhydro-N-acetylmuramic acid kinase family.

The enzyme catalyses 1,6-anhydro-N-acetyl-beta-muramate + ATP + H2O = N-acetyl-D-muramate 6-phosphate + ADP + H(+). It participates in amino-sugar metabolism; 1,6-anhydro-N-acetylmuramate degradation. The protein operates within cell wall biogenesis; peptidoglycan recycling. Catalyzes the specific phosphorylation of 1,6-anhydro-N-acetylmuramic acid (anhMurNAc) with the simultaneous cleavage of the 1,6-anhydro ring, generating MurNAc-6-P. Is required for the utilization of anhMurNAc either imported from the medium or derived from its own cell wall murein, and thus plays a role in cell wall recycling. The sequence is that of Anhydro-N-acetylmuramic acid kinase from Burkholderia lata (strain ATCC 17760 / DSM 23089 / LMG 22485 / NCIMB 9086 / R18194 / 383).